A 159-amino-acid chain; its full sequence is Small ribosomal subunit protein uS9 (159 aa).

Belongs to the universal ribosomal protein uS9 family.

The chain is Small ribosomal subunit protein uS9 from Rickettsia peacockii (strain Rustic).